The chain runs to 407 residues: Nicotinate phosphoribosyltransferase (407 aa).

H224 carries the post-translational modification Phosphohistidine; by autocatalysis.

This sequence belongs to the NAPRTase family. Post-translationally, transiently phosphorylated on a His residue during the reaction cycle. Phosphorylation strongly increases the affinity for substrates and increases the rate of nicotinate D-ribonucleotide production. Dephosphorylation regenerates the low-affinity form of the enzyme, leading to product release.

The enzyme catalyses nicotinate + 5-phospho-alpha-D-ribose 1-diphosphate + ATP + H2O = nicotinate beta-D-ribonucleotide + ADP + phosphate + diphosphate. The protein operates within cofactor biosynthesis; NAD(+) biosynthesis; nicotinate D-ribonucleotide from nicotinate: step 1/1. Its function is as follows. Catalyzes the synthesis of beta-nicotinate D-ribonucleotide from nicotinate and 5-phospho-D-ribose 1-phosphate at the expense of ATP. This is Nicotinate phosphoribosyltransferase from Pseudomonas savastanoi pv. phaseolicola (strain 1448A / Race 6) (Pseudomonas syringae pv. phaseolicola (strain 1448A / Race 6)).